Consider the following 208-residue polypeptide: Small ribosomal subunit protein uS4 (208 aa).

Positions 98 to 160 constitute an S4 RNA-binding domain; it reads RRLDNVVYRL…SKSKTRFVEI (63 aa).

This sequence belongs to the universal ribosomal protein uS4 family. Part of the 30S ribosomal subunit. Contacts protein S5. The interaction surface between S4 and S5 is involved in control of translational fidelity.

Its function is as follows. One of the primary rRNA binding proteins, it binds directly to 16S rRNA where it nucleates assembly of the body of the 30S subunit. With S5 and S12 plays an important role in translational accuracy. This is Small ribosomal subunit protein uS4 from Caldicellulosiruptor bescii (strain ATCC BAA-1888 / DSM 6725 / KCTC 15123 / Z-1320) (Anaerocellum thermophilum).